Here is a 396-residue protein sequence, read N- to C-terminus: Ornithine aminotransferase (396 aa).

Lys-255 is subject to N6-(pyridoxal phosphate)lysine.

This sequence belongs to the class-III pyridoxal-phosphate-dependent aminotransferase family. OAT subfamily. Pyridoxal 5'-phosphate is required as a cofactor.

The protein resides in the cytoplasm. It catalyses the reaction a 2-oxocarboxylate + L-ornithine = L-glutamate 5-semialdehyde + an L-alpha-amino acid. It functions in the pathway amino-acid biosynthesis; L-proline biosynthesis; L-glutamate 5-semialdehyde from L-ornithine: step 1/1. In terms of biological role, catalyzes the interconversion of ornithine to glutamate semialdehyde. This Staphylococcus epidermidis (strain ATCC 35984 / DSM 28319 / BCRC 17069 / CCUG 31568 / BM 3577 / RP62A) protein is Ornithine aminotransferase.